The sequence spans 331 residues: Ketol-acid reductoisomerase (NADP(+)) (331 aa).

The 181-residue stretch at 2–182 folds into the KARI N-terminal Rossmann domain; that stretch reads AKLFYDSDAD…GGTRAGILET (181 aa). NADP(+) is bound by residues 25–28, Ser-51, Ser-53, and 83–86; these read YGSQ and DEFQ. The active site involves His-108. Gly-134 is an NADP(+) binding site. The KARI C-terminal knotted domain occupies 183-328; it reads NFKEETETDL…KTLRSMFSWL (146 aa). Residues Asp-191, Glu-195, Glu-227, and Glu-231 each contribute to the Mg(2+) site. Ser-252 is a substrate binding site.

It belongs to the ketol-acid reductoisomerase family. The cofactor is Mg(2+).

The enzyme catalyses (2R)-2,3-dihydroxy-3-methylbutanoate + NADP(+) = (2S)-2-acetolactate + NADPH + H(+). The catalysed reaction is (2R,3R)-2,3-dihydroxy-3-methylpentanoate + NADP(+) = (S)-2-ethyl-2-hydroxy-3-oxobutanoate + NADPH + H(+). Its pathway is amino-acid biosynthesis; L-isoleucine biosynthesis; L-isoleucine from 2-oxobutanoate: step 2/4. It participates in amino-acid biosynthesis; L-valine biosynthesis; L-valine from pyruvate: step 2/4. In terms of biological role, involved in the biosynthesis of branched-chain amino acids (BCAA). Catalyzes an alkyl-migration followed by a ketol-acid reduction of (S)-2-acetolactate (S2AL) to yield (R)-2,3-dihydroxy-isovalerate. In the isomerase reaction, S2AL is rearranged via a Mg-dependent methyl migration to produce 3-hydroxy-3-methyl-2-ketobutyrate (HMKB). In the reductase reaction, this 2-ketoacid undergoes a metal-dependent reduction by NADPH to yield (R)-2,3-dihydroxy-isovalerate. The protein is Ketol-acid reductoisomerase (NADP(+)) of Prochlorococcus marinus (strain NATL1A).